The chain runs to 65 residues: Small ribosomal subunit protein bS21 (65 aa).

Belongs to the bacterial ribosomal protein bS21 family.

The chain is Small ribosomal subunit protein bS21 from Flavobacterium psychrophilum (strain ATCC 49511 / DSM 21280 / CIP 103535 / JIP02/86).